Consider the following 243-residue polypeptide: Transmembrane protein 174 (243 aa).

Helical transmembrane passes span 40-60 (LLFSGIFLGLVGITFTVMGWI) and 73-93 (LLGPVLLSVGVTFILIAVCKF).

As to quaternary structure, interacts with SLC34A1; regulates SLC34A1 internalization by PTH and FGF23.

The protein localises to the endoplasmic reticulum membrane. It is found in the apical cell membrane. In terms of biological role, regulator of plasma phosphate homeostasis. Decreases serum inorganic phosphate (Pi) uptake by regulating the sodium-phosphate cotransporter SLC34A1 trafficking by PTH and FGF23 in the kidney. The protein is Transmembrane protein 174 (TMEM174) of Pongo abelii (Sumatran orangutan).